We begin with the raw amino-acid sequence, 355 residues long: (3aS,4S,5R,7aS)-5-hydroxy-7a-methyl-1-oxo-octahydro-1H-indene-4-carboxyl-CoA dehydrogenase (355 aa).

FMN-binding positions include 21–23 (GMG), 173–175 (AGG), and 196–197 (GT).

This sequence belongs to the nitronate monooxygenase family.

The enzyme catalyses (3aS,4S,5R,7aS)-5-hydroxy-7a-methyl-1-oxo-octahydro-1H-indene-4-carboxyl-CoA + NAD(+) = (5R,7aS)-5-hydroxy-7a-methyl-1-oxo-2,3,5,6,7,7a-hexahydro-1H-indene-carboxyl-CoA + NADH + H(+). It functions in the pathway steroid metabolism; cholesterol degradation. Its activity is regulated as follows. Requires the presence of IpdF. In terms of biological role, involved in the final steps of cholesterol and steroid degradation. Probably catalyzes the introduction of a double bound into the C ring of 5OH-HIC-CoA, leading to the formation of (5R,7aS)-5-hydroxy-7a-methyl-1-oxo-3,5,6,7-tetrahydro-2H-indene-4-carboxyl-CoA. This is (3aS,4S,5R,7aS)-5-hydroxy-7a-methyl-1-oxo-octahydro-1H-indene-4-carboxyl-CoA dehydrogenase from Mycobacterium tuberculosis (strain ATCC 25618 / H37Rv).